The following is a 254-amino-acid chain: Proline-rich protein 23A3 (254 aa).

Disordered regions lie at residues 1-50 (MLRT…LEAP), 161-196 (ASPP…GAEQ), and 212-254 (PFPG…LVYE). Low complexity predominate over residues 35–50 (EPACPEPLAQPELEAP). Over residues 214 to 241 (PGSPLQPLPPSPSRNPQEQLPPCPPCSP) the composition is skewed to pro residues. Residues 243–254 (APRRARKRLVYE) show a composition bias toward basic residues.

The protein belongs to the PRR23 family.

The chain is Proline-rich protein 23A3 from Mus musculus (Mouse).